Reading from the N-terminus, the 1021-residue chain is Sodium/potassium-transporting ATPase subunit alpha-1 (1021 aa).

Positions 1-5 (MGKGA) are excised as a propeptide. The span at 1–11 (MGKGAGRDKYE) shows a compositional bias: basic and acidic residues. The tract at residues 1-31 (MGKGAGRDKYEPTATSEHGTKKKKAKERDMD) is disordered. The Cytoplasmic portion of the chain corresponds to 6–85 (GRDKYEPTAT…NTLTPPPTTP (80 aa)). Phosphotyrosine is present on Y10. Position 16 is a phosphoserine; by PKC (S16). Residues 80–82 (PPP) form a phosphoinositide-3 kinase binding region. A helical transmembrane segment spans residues 86-106 (EWVKFCRQLFGGFSLLLWIGS). Residues 107-129 (LLCFLAYGITSVMEGEPNSDNLY) are Extracellular-facing. Residues 130-150 (LGVVLAAVVIITGCFSYYQEA) traverse the membrane as a helical segment. At 151–286 (KSSKIMESFK…GGKTPIAMEI (136 aa)) the chain is on the cytoplasmic side. Residues 214 to 233 (SSLTGESEPQTRSPDFSNEN) form a disordered region. The helical transmembrane segment at 287–306 (EHFIHLITGVAVFLGVSFFI) threads the bilayer. At 307–318 (LSLILEYTWLEA) the chain is on the extracellular side. Residues 319-336 (VIFLIGIIVANVPEGLLA) traverse the membrane as a helical segment. Residues 337–770 (TVTVCLTLTA…EEGRLIFDNL (434 aa)) lie on the Cytoplasmic side of the membrane. The 4-aspartylphosphate intermediate role is filled by D374. ATP is bound at residue K485. Positions 715 and 719 each coordinate Mg(2+). A helical transmembrane segment spans residues 771–790 (KKSIAYTLTSNIPEITPFLI). The Extracellular portion of the chain corresponds to 791-800 (FIIANIPLPL). The chain crosses the membrane as a helical span at residues 801–821 (GTCTILCIDLGTDMVPAISLA). The Cytoplasmic portion of the chain corresponds to 822-841 (YEQAESDIMKRQPRNPKTDK). The chain crosses the membrane as a helical span at residues 842–864 (LVNERLISMAYGQIGMIQALGGF). The Extracellular portion of the chain corresponds to 865–916 (FTYFVIMAENGFLPSGLVGIRLQWDDRWINDVEDSYGQQWTFEQRKIVEFTC). A helical transmembrane segment spans residues 917-936 (HTAFFVSIVVVQWADLIICK). The Cytoplasmic portion of the chain corresponds to 937-949 (TRRNSVFQQGMKN). A Phosphoserine; by PKA modification is found at S941. Residues 950–968 (KILIFGLFEETALAAFLSY) traverse the membrane as a helical segment. Residues 969-983 (CPGMDVALRMYPLKP) are Extracellular-facing. The chain crosses the membrane as a helical span at residues 984 to 1004 (TWWFCAFPYSLLIFLYDEIRK). Topologically, residues 1005–1021 (LIIRRNPGGWVERETYY) are cytoplasmic.

The protein belongs to the cation transport ATPase (P-type) (TC 3.A.3) family. Type IIC subfamily. As to quaternary structure, the sodium/potassium-transporting ATPase is composed of a catalytic alpha subunit, an auxiliary non-catalytic beta subunit and an additional regulatory subunit. Post-translationally, phosphorylation on Tyr-10 modulates pumping activity.

The protein resides in the cell membrane. It localises to the sarcolemma. It carries out the reaction K(+)(out) + Na(+)(in) + ATP + H2O = K(+)(in) + Na(+)(out) + ADP + phosphate + H(+). In terms of biological role, this is the catalytic component of the active enzyme, which catalyzes the hydrolysis of ATP coupled with the exchange of sodium and potassium ions across the plasma membrane. This action creates the electrochemical gradient of sodium and potassium ions, providing the energy for active transport of various nutrients. The protein is Sodium/potassium-transporting ATPase subunit alpha-1 (ATP1A1) of Gallus gallus (Chicken).